The chain runs to 871 residues: MGFSAHEIRELFLSFFEKKGHTRVKSAPLVPENDPTLLFVNAGMVPFKNVFLGLEKRPYKRATSCQKCLRVSGKHNDLEQVGYTSRHHTFFEMLGNFSFGDYFKKEAIEYAWEFVTEVLKLPKERLYVSVYKDDEEAYRIWNEHIGIPSERIWRLGEEDNFWQMGDTGPCGPSSEIYVDRGEEYEGEERYLEIWNLVFMQYNRDENGVLTPLPHPNIDTGMGLERIASVLQGKNSNFEIDIIYPLIEFGEEVSGKKYGEKFETDVALRVIADHLRAITFAISDGVIPSNEGRGYVIRRILRRAMRFGYQLGITEPFLYKGIDLVVDIMKEPYPELELSRDFVKGIVKGEEERFIRTLRSGMEYIQEVIEKALSEGRKTLTGKEVFTAYDTYGFPVDLIQEIAKEKGLEIDLEGFQCELEEQRERARKSFKIETKEVKPVYAHLKELGITSRFVGYEHLEYETEVLGIIVGDEIVSEIKEGEEGEIILRETPFYPEGGGQIGDSGIIETDKGIFKVEDTQRPTEGIIVHIGKLLKGKISVKDIVHARVDKERRWDIMRNHTATHLLHAALRNLLGEHVRQAGSLVADKYLRFDFTHFSPLTEEEIKRIEELVNEKIRENLPVSVMEMAYQEALQTGAIAIFEEKYGERVRVISCGEFSKELCGGTHVSATGDIGYFKIISESSVGAGVRRIVAQTGRWAVNTAFEEHTTLKKVSNALGVKEDEVVQKVEELKEEIKEKEKEIQKLRQEILKLQIREKVKEERHRELTLYYGVFEDVEPEELRNLADILRQRTGKDVVFIASKKEGKINFVIASSKGISKEVRANELIRQVGKVLKGGGGGREDLAQGGGKAPDKFDESVKLLKELLSGVSVG.

Zn(2+)-binding residues include His559, His563, Cys661, and His665.

The protein belongs to the class-II aminoacyl-tRNA synthetase family. Requires Zn(2+) as cofactor.

The protein resides in the cytoplasm. The enzyme catalyses tRNA(Ala) + L-alanine + ATP = L-alanyl-tRNA(Ala) + AMP + diphosphate. Functionally, catalyzes the attachment of alanine to tRNA(Ala) in a two-step reaction: alanine is first activated by ATP to form Ala-AMP and then transferred to the acceptor end of tRNA(Ala). Also edits incorrectly charged Ser-tRNA(Ala) and Gly-tRNA(Ala) via its editing domain. The chain is Alanine--tRNA ligase from Aquifex pyrophilus.